The primary structure comprises 150 residues: Deoxyuridine 5'-triphosphate nucleotidohydrolase (150 aa).

Substrate-binding positions include 69-71 (RSG), asparagine 82, 86-88 (LID), and lysine 96.

Belongs to the dUTPase family. The cofactor is Mg(2+).

It carries out the reaction dUTP + H2O = dUMP + diphosphate + H(+). Its pathway is pyrimidine metabolism; dUMP biosynthesis; dUMP from dCTP (dUTP route): step 2/2. Functionally, this enzyme is involved in nucleotide metabolism: it produces dUMP, the immediate precursor of thymidine nucleotides and it decreases the intracellular concentration of dUTP so that uracil cannot be incorporated into DNA. The chain is Deoxyuridine 5'-triphosphate nucleotidohydrolase from Neisseria gonorrhoeae (strain NCCP11945).